Reading from the N-terminus, the 240-residue chain is 2,3,4,5-tetrahydropyridine-2,6-dicarboxylate N-acetyltransferase (240 aa).

This sequence belongs to the transferase hexapeptide repeat family. DapH subfamily.

The enzyme catalyses (S)-2,3,4,5-tetrahydrodipicolinate + acetyl-CoA + H2O = L-2-acetamido-6-oxoheptanedioate + CoA. It functions in the pathway amino-acid biosynthesis; L-lysine biosynthesis via DAP pathway; LL-2,6-diaminopimelate from (S)-tetrahydrodipicolinate (acetylase route): step 1/3. Functionally, catalyzes the transfer of an acetyl group from acetyl-CoA to tetrahydrodipicolinate. This Bacillus anthracis (strain A0248) protein is 2,3,4,5-tetrahydropyridine-2,6-dicarboxylate N-acetyltransferase.